The chain runs to 253 residues: 1-(5-phosphoribosyl)-5-[(5-phosphoribosylamino)methylideneamino] imidazole-4-carboxamide isomerase (253 aa).

The active-site Proton acceptor is Asp-8. Catalysis depends on Asp-131, which acts as the Proton donor.

The protein belongs to the HisA/HisF family.

It is found in the cytoplasm. The catalysed reaction is 1-(5-phospho-beta-D-ribosyl)-5-[(5-phospho-beta-D-ribosylamino)methylideneamino]imidazole-4-carboxamide = 5-[(5-phospho-1-deoxy-D-ribulos-1-ylimino)methylamino]-1-(5-phospho-beta-D-ribosyl)imidazole-4-carboxamide. It participates in amino-acid biosynthesis; L-histidine biosynthesis; L-histidine from 5-phospho-alpha-D-ribose 1-diphosphate: step 4/9. The chain is 1-(5-phosphoribosyl)-5-[(5-phosphoribosylamino)methylideneamino] imidazole-4-carboxamide isomerase from Polynucleobacter asymbioticus (strain DSM 18221 / CIP 109841 / QLW-P1DMWA-1) (Polynucleobacter necessarius subsp. asymbioticus).